The primary structure comprises 623 residues: Glutathione import ATP-binding protein GsiA (623 aa).

2 consecutive ABC transporter domains span residues 15 to 269 (VSGL…QTLL) and 325 to 564 (LRSG…RKLM). Residues 49-56 (GESGSGKS) and 357-364 (GESGSGKS) contribute to the ATP site.

The protein belongs to the ABC transporter superfamily. Glutathione importer (TC 3.A.1.5.11) family. As to quaternary structure, the complex is composed of two ATP-binding proteins (GsiA), two transmembrane proteins (GsiC and GsiD) and a solute-binding protein (GsiB).

Its subcellular location is the cell inner membrane. It carries out the reaction glutathione(out) + ATP + H2O = glutathione(in) + ADP + phosphate + H(+). Its function is as follows. Part of the ABC transporter complex GsiABCD involved in glutathione import. Responsible for energy coupling to the transport system. The sequence is that of Glutathione import ATP-binding protein GsiA from Salmonella choleraesuis (strain SC-B67).